Reading from the N-terminus, the 392-residue chain is Tropomodulin (392 aa).

Disordered stretches follow at residues 1-30 (MSQA…QLPS), 59-90 (DLNN…GPYK), and 118-138 (QKRG…PENG). Polar residues predominate over residues 16 to 29 (SAPSANSQQGTQLP). 2 stretches are compositionally biased toward basic and acidic residues: residues 76-90 (RCRD…GPYK) and 122-138 (KVYD…PENG).

It belongs to the tropomodulin family. In terms of assembly, binds to the N-terminus of actin.

Its subcellular location is the cytoplasm. The protein resides in the cytoskeleton. Its function is as follows. Acts as the pointed end capping protein which maintains the length and dynamics of the actin filament. Blocks the elongation and depolymerization of the actin filaments at the pointed end. In Caenorhabditis elegans, this protein is Tropomodulin (unc-94).